A 115-amino-acid polypeptide reads, in one-letter code: Tyrosine-protein phosphatase 19 (115 aa).

The 115-residue stretch at 1-115 (WLMIVEQKCR…ETGSDAPMVV (115 aa)) folds into the Tyrosine-protein phosphatase domain. Aspartate 83 is a binding site for substrate.

The protein belongs to the protein-tyrosine phosphatase family.

The catalysed reaction is O-phospho-L-tyrosyl-[protein] + H2O = L-tyrosyl-[protein] + phosphate. The protein is Tyrosine-protein phosphatase 19 (STY-19) of Styela plicata (Wrinkled sea squirt).